The sequence spans 358 residues: Photosystem II protein D1 3 (358 aa).

3 helical membrane-spanning segments follow: residues 28-45 (YIGW…AATT), 117-132 (HFLI…QWEL), and 141-155 (WICV…AAMA). His-117 is a chlorophyll a binding site. Residue Tyr-125 coordinates pheophytin a. Asp-169 and Glu-188 together coordinate [CaMn4O5] cluster. Residues 196–217 (FHMLGVAGVFGGSLFSAMHGSL) traverse the membrane as a helical segment. Chlorophyll a is bound at residue His-197. Residues His-214 and 263-264 (SF) each bind a quinone. Fe cation is bound at residue His-214. His-271 is a binding site for Fe cation. A helical membrane pass occupies residues 273-287 (LLGAWPVVGIWFTSM). [CaMn4O5] cluster-binding residues include His-331, Glu-332, Asp-341, and Ala-343. Residues 344–358 (TVESTPVALQAPAIG) constitute a propeptide that is removed on maturation.

Belongs to the reaction center PufL/M/PsbA/D family. As to quaternary structure, PSII is composed of 1 copy each of membrane proteins PsbA, PsbB, PsbC, PsbD, PsbE, PsbF, PsbH, PsbI, PsbJ, PsbK, PsbL, PsbM, PsbT, PsbX, PsbY, PsbZ, Psb30/Ycf12, peripheral proteins PsbO, CyanoQ (PsbQ), PsbU, PsbV and a large number of cofactors. It forms dimeric complexes. The D1/D2 heterodimer binds P680, chlorophylls that are the primary electron donor of PSII, and subsequent electron acceptors. It shares a non-heme iron and each subunit binds pheophytin, quinone, additional chlorophylls, carotenoids and lipids. D1 provides most of the ligands for the Mn4-Ca-O5 cluster of the oxygen-evolving complex (OEC). There is also a Cl(-1) ion associated with D1 and D2, which is required for oxygen evolution. The PSII complex binds additional chlorophylls, carotenoids and specific lipids. is required as a cofactor. In terms of processing, tyr-160 forms a radical intermediate that is referred to as redox-active TyrZ, YZ or Y-Z. Post-translationally, C-terminally processed by CtpA; processing is essential to allow assembly of the oxygen-evolving complex and thus photosynthetic growth.

Its subcellular location is the cellular thylakoid membrane. The catalysed reaction is 2 a plastoquinone + 4 hnu + 2 H2O = 2 a plastoquinol + O2. Functionally, photosystem II (PSII) is a light-driven water:plastoquinone oxidoreductase that uses light energy to abstract electrons from H(2)O, generating O(2) and a proton gradient subsequently used for ATP formation. It consists of a core antenna complex that captures photons, and an electron transfer chain that converts photonic excitation into a charge separation. The D1/D2 (PsbA/PsbD) reaction center heterodimer binds P680, the primary electron donor of PSII as well as several subsequent electron acceptors. The chain is Photosystem II protein D1 3 from Synechococcus sp. (strain CC9311).